The primary structure comprises 605 residues: Leucine-rich repeat-containing protein 40 (605 aa).

Positions 1–21 (MSRFKRGGKAPDPLSGFRAPK) are disordered. LRR repeat units lie at residues 83–104 (DLTKLILASNKLQALSEDISLL), 106–127 (ALVVLDIHDNQIASLPCAIREL), 129–151 (NLQKLNISHNKIKQLPNELQHLQ), 152–173 (NLKSFLLQHNQLEELPDSIGHL), 175–196 (ILEELDVSNNCLRSVSSSVGQL), 198–219 (GLVKFNLSSNKLTALPTEIGKM), 221–242 (NLRQLDCTSNLLENVPASVAGM), 244–265 (SLEQLYLRQNKLTYLPELPFLT), 266–287 (KLKELHVGNNQIQTLGPEHLQN), 290–311 (SLSVLELRYNKLKVLPKEISLL), 313–335 (GLERLDLSNNDIGSLPDTLGSLP), 336–357 (NLKSLQLDGNPLRGIRRDILNK), 429–450 (PITTVNFSKNQLTEVPARIVEM), 453–475 (SVYDVNLGFNKISSISLNLCMLL), 476–497 (KLTHLDMRNNALASLPPEMEAL), 499–520 (RLQSIILSFNRFKHFPDVLYTI), 522–543 (NLETILISSNQIGSIDPIQLKK), 546–567 (KLSTLDLQNNDLLQIPPALGNC), and 569–590 (SLRALHLEGNPFRNPRATILAK).

The polypeptide is Leucine-rich repeat-containing protein 40 (lrrc40) (Xenopus laevis (African clawed frog)).